The following is a 793-amino-acid chain: Toll-like receptor 2 type-1 (793 aa).

An N-terminal signal peptide occupies residues 1–25; sequence MFNQSKQKPTMKLMWQAWLIYTALA. The Extracellular portion of the chain corresponds to 26–597; sequence AHLPEEQALR…QLSLMECHRS (572 aa). Cys41 and Cys47 are oxidised to a cystine. A glycan (N-linked (GlcNAc...) asparagine) is linked at Asn48. 6 LRR repeats span residues 64–85, 88–109, 112–133, 136–157, 161–182, and 185–206; these read KITV…DLQK, NLRT…SFGS, KLEL…WFGP, SLQH…SPFS, NLSS…NFEG, and FLNT…SLKS. Asn120 carries an N-linked (GlcNAc...) asparagine glycan. Asn161, Asn195, Asn254, and Asn325 each carry an N-linked (GlcNAc...) asparagine glycan. Cys362 and Cys391 are disulfide-bonded. LRR repeat units follow at residues 370–391, 397–418, 423–444, 446–467, 468–486, 487–508, and 509–530; these read SLLY…ETIC, SLQT…ARYI, KLIN…CEWP, NLKY…IPST, LEVL…LQLP, FLKE…TDIP, and NLVA…EFES. A glycan (N-linked (GlcNAc...) asparagine) is linked at Asn402. Cysteines 441 and 463 form a disulfide. N-linked (GlcNAc...) asparagine glycosylation occurs at Asn451. Residues 542 to 596 form the LRRCT domain; the sequence is NNFICSCEFLSFIHHEAGIAQVLVGWPESYICDSPLTVRGAQVGSVQLSLMECHR. Residues 598–618 form a helical membrane-spanning segment; the sequence is LLVSLICTLVFLFILILVVVG. Topologically, residues 619-793 are cytoplasmic; that stretch reads YKYHAVWYMR…WENLKAALKS (175 aa). Residues 648-791 form the TIR domain; the sequence is ICYDAFVSYS…MFWENLKAAL (144 aa).

This sequence belongs to the Toll-like receptor family. In terms of assembly, binds MYD88 (via TIR domain). Post-translationally, N-glycosylated. TLR2-1 is more heavily glycosylated than TLR2-2. Highly expressed in ovary. Detected at lower levels in heart, lung, gizzard and testis.

It localises to the membrane. Functionally, participates in the innate immune response to microbial agents. Acts via MYD88 and TRAF6, leading to NF-kappa-B activation, cytokine secretion and the inflammatory response. Does not respond to LPS and responds with less ability than TLR2-2 to mycoplasmal macrophage-activating lipopeptide-2kD (MALP-2). This chain is Toll-like receptor 2 type-1 (TLR2-1), found in Gallus gallus (Chicken).